The primary structure comprises 391 residues: 3-ketoacyl-CoA thiolase (391 aa).

The active-site Acyl-thioester intermediate is cysteine 95. Active-site proton acceptor residues include histidine 347 and cysteine 377.

The protein belongs to the thiolase-like superfamily. Thiolase family. Heterotetramer of two alpha chains (FadB) and two beta chains (FadA).

It localises to the cytoplasm. The enzyme catalyses an acyl-CoA + acetyl-CoA = a 3-oxoacyl-CoA + CoA. Its pathway is lipid metabolism; fatty acid beta-oxidation. Functionally, catalyzes the final step of fatty acid oxidation in which acetyl-CoA is released and the CoA ester of a fatty acid two carbons shorter is formed. In Pseudomonas syringae pv. tomato (strain ATCC BAA-871 / DC3000), this protein is 3-ketoacyl-CoA thiolase.